The primary structure comprises 284 residues: Bifunctional protein FolD (284 aa).

NADP(+) contacts are provided by residues 165 to 167 (GRS) and Ser190.

This sequence belongs to the tetrahydrofolate dehydrogenase/cyclohydrolase family. As to quaternary structure, homodimer.

It carries out the reaction (6R)-5,10-methylene-5,6,7,8-tetrahydrofolate + NADP(+) = (6R)-5,10-methenyltetrahydrofolate + NADPH. The catalysed reaction is (6R)-5,10-methenyltetrahydrofolate + H2O = (6R)-10-formyltetrahydrofolate + H(+). It participates in one-carbon metabolism; tetrahydrofolate interconversion. Catalyzes the oxidation of 5,10-methylenetetrahydrofolate to 5,10-methenyltetrahydrofolate and then the hydrolysis of 5,10-methenyltetrahydrofolate to 10-formyltetrahydrofolate. The chain is Bifunctional protein FolD from Streptococcus equi subsp. equi (strain 4047).